We begin with the raw amino-acid sequence, 643 residues long: 1-deoxy-D-xylulose-5-phosphate synthase (643 aa).

Thiamine diphosphate-binding positions include H72 and 113–115 (GHA). Mg(2+) is bound at residue D144. Thiamine diphosphate-binding positions include 145 to 146 (GA), N174, Y287, and E370. N174 is a binding site for Mg(2+).

The protein belongs to the transketolase family. DXPS subfamily. As to quaternary structure, homodimer. Requires Mg(2+) as cofactor. The cofactor is thiamine diphosphate.

The catalysed reaction is D-glyceraldehyde 3-phosphate + pyruvate + H(+) = 1-deoxy-D-xylulose 5-phosphate + CO2. Its pathway is metabolic intermediate biosynthesis; 1-deoxy-D-xylulose 5-phosphate biosynthesis; 1-deoxy-D-xylulose 5-phosphate from D-glyceraldehyde 3-phosphate and pyruvate: step 1/1. Its function is as follows. Catalyzes the acyloin condensation reaction between C atoms 2 and 3 of pyruvate and glyceraldehyde 3-phosphate to yield 1-deoxy-D-xylulose-5-phosphate (DXP). The sequence is that of 1-deoxy-D-xylulose-5-phosphate synthase from Prochlorococcus marinus (strain MIT 9211).